The sequence spans 367 residues: tRNA-specific 2-thiouridylase MnmA 2 (367 aa).

ATP-binding positions include 10–17 (GMSGGVDS) and methionine 36. The tract at residues 96 to 98 (NPD) is interaction with target base in tRNA. The Nucleophile role is filled by cysteine 101. Cysteine 101 and cysteine 197 are oxidised to a cystine. An ATP-binding site is contributed by glycine 125. An interaction with tRNA region spans residues 147-149 (KDQ). Cysteine 197 (cysteine persulfide intermediate) is an active-site residue. The interval 314–315 (RY) is interaction with tRNA.

This sequence belongs to the MnmA/TRMU family.

The protein localises to the cytoplasm. It carries out the reaction S-sulfanyl-L-cysteinyl-[protein] + uridine(34) in tRNA + AH2 + ATP = 2-thiouridine(34) in tRNA + L-cysteinyl-[protein] + A + AMP + diphosphate + H(+). In terms of biological role, catalyzes the 2-thiolation of uridine at the wobble position (U34) of tRNA, leading to the formation of s(2)U34. The chain is tRNA-specific 2-thiouridylase MnmA 2 from Aliarcobacter butzleri (strain RM4018) (Arcobacter butzleri).